Here is a 213-residue protein sequence, read N- to C-terminus: rRNA N(6)-adenosine-methyltransferase Mettl5 (213 aa).

S-adenosyl-L-methionine contacts are provided by residues Gln28, Thr31, Gly59, Cys62, and 108-109 (DV).

The protein belongs to the methyltransferase superfamily. PrmA family. Heterodimer; heterodimerizes with Trmt112. Enriched in the brain.

It is found in the cytoplasm. The enzyme catalyses adenosine in rRNA + S-adenosyl-L-methionine = N(6)-methyladenosine in rRNA + S-adenosyl-L-homocysteine + H(+). Its function is as follows. Catalytic subunit of a heterodimer with Trmt112, which specifically methylates the 6th position of adenine in 18S rRNA. The chain is rRNA N(6)-adenosine-methyltransferase Mettl5 from Drosophila melanogaster (Fruit fly).